Here is a 250-residue protein sequence, read N- to C-terminus: Probable ABC transporter permease protein BAB2_1148 (250 aa).

Helical transmembrane passes span 12-32 (LLSF…GAVV), 63-83 (VLSG…LMGW), 94-114 (WVQF…IVTL), 122-142 (IFVI…QGVI), 172-192 (VPFI…TVVA), and 211-231 (LYYD…LGLF). In terms of domain architecture, ABC transmembrane type-1 spans 56–236 (IFASLRRVLS…ILGLFMDRLL (181 aa)).

The protein belongs to the binding-protein-dependent transport system permease family. In terms of assembly, the complex is composed of two ATP-binding proteins (BAB2_1147), two transmembrane proteins (BAB2_1148) and a solute-binding protein (BAB2_1146).

Its subcellular location is the cell inner membrane. In terms of biological role, probably part of an ABC transporter complex. Probably responsible for the translocation of the substrate across the membrane. The chain is Probable ABC transporter permease protein BAB2_1148 from Brucella abortus (strain 2308).